The following is a 444-amino-acid chain: Trigger factor (444 aa).

Residues 166 to 251 enclose the PPIase FKBP-type domain; it reads GDQVVIDFEG…VHAVKAPKPA (86 aa).

This sequence belongs to the FKBP-type PPIase family. Tig subfamily.

It is found in the cytoplasm. It carries out the reaction [protein]-peptidylproline (omega=180) = [protein]-peptidylproline (omega=0). Involved in protein export. Acts as a chaperone by maintaining the newly synthesized protein in an open conformation. Functions as a peptidyl-prolyl cis-trans isomerase. The chain is Trigger factor (tig) from Rhodobacter capsulatus (strain ATCC BAA-309 / NBRC 16581 / SB1003).